The following is a 514-amino-acid chain: Maturase K (514 aa).

Belongs to the intron maturase 2 family. MatK subfamily.

It localises to the plastid. The protein localises to the chloroplast. Usually encoded in the trnK tRNA gene intron. Probably assists in splicing its own and other chloroplast group II introns. This Erythronium grandiflorum (Yellow avalanche-lily) protein is Maturase K.